We begin with the raw amino-acid sequence, 408 residues long: tRNA-specific 2-thiouridylase MnmA (408 aa).

ATP-binding positions include 27–34 and Leu53; that span reads AMSGGVDS. The Nucleophile role is filled by Cys121. Residues Cys121 and Cys222 are joined by a disulfide bond. ATP is bound at residue Gly145. Residues 172–174 form an interaction with tRNA region; sequence RDQ. Cys222 functions as the Cysteine persulfide intermediate in the catalytic mechanism.

This sequence belongs to the MnmA/TRMU family.

It localises to the cytoplasm. The catalysed reaction is S-sulfanyl-L-cysteinyl-[protein] + uridine(34) in tRNA + AH2 + ATP = 2-thiouridine(34) in tRNA + L-cysteinyl-[protein] + A + AMP + diphosphate + H(+). In terms of biological role, catalyzes the 2-thiolation of uridine at the wobble position (U34) of tRNA, leading to the formation of s(2)U34. The protein is tRNA-specific 2-thiouridylase MnmA of Rhizobium etli (strain CIAT 652).